Consider the following 65-residue polypeptide: Large ribosomal subunit protein bL33c (65 aa).

The protein belongs to the bacterial ribosomal protein bL33 family.

It localises to the plastid. The protein resides in the chloroplast. In Gracilaria tenuistipitata var. liui (Red alga), this protein is Large ribosomal subunit protein bL33c.